We begin with the raw amino-acid sequence, 318 residues long: Elongation factor Ts, mitochondrial (318 aa).

A mitochondrion-targeting transit peptide spans 1-18; the sequence is MLLQRFFTRALHSTRQLY.

This sequence belongs to the EF-Ts family.

The protein localises to the mitochondrion. In terms of biological role, associates with the EF-Tu.GDP complex and induces the exchange of GDP to GTP. It remains bound to the aminoacyl-tRNA.EF-Tu.GTP complex up to the GTP hydrolysis stage on the ribosome. The chain is Elongation factor Ts, mitochondrial from Drosophila melanogaster (Fruit fly).